The sequence spans 249 residues: MPTLLELSSVLPLAELEVGQHFYWQIGNYRLHGQVFLTSWFVIAALVVLSLLANRNLQRIPSGLQNFMEYVLDFIRNLARTQIGEKEYRPWVPFIGTLFLFIFLSNWSGALIPWKLIKLPSGELAAPTSDINTTVALALLTSLAYFYAGFSRKGLGYFGNYVHPTPVMLPFKILEDFTKPLSLSFRLFGNILADELVVAVLVLLVPLFVPLPAMILGLFTSAIQALIFATLAASYIGEAVEEHGEEHAE.

5 helical membrane-spanning segments follow: residues 33 to 53 (GQVFLTSWFVIAALVVLSLLA), 92 to 112 (VPFIGTLFLFIFLSNWSGALI), 131 to 151 (INTTVALALLTSLAYFYAGFS), 196 to 216 (LVVAVLVLLVPLFVPLPAMIL), and 217 to 237 (GLFTSAIQALIFATLAASYIG).

This sequence belongs to the ATPase A chain family. In terms of assembly, F-type ATPases have 2 components, CF(1) - the catalytic core - and CF(0) - the membrane proton channel. CF(1) has five subunits: alpha(3), beta(3), gamma(1), delta(1), epsilon(1). CF(0) has four main subunits: a, b, b' and c.

Its subcellular location is the cellular thylakoid membrane. Its function is as follows. Key component of the proton channel; it plays a direct role in the translocation of protons across the membrane. The protein is ATP synthase subunit a of Synechococcus elongatus (strain ATCC 33912 / PCC 7942 / FACHB-805) (Anacystis nidulans R2).